Here is a 151-residue protein sequence, read N- to C-terminus: Type 4 adapter protein IcmW (151 aa).

As to quaternary structure, the T4BSS is a complex nanomachine composed of several subcomplexes. This subunit is part of the Type IV Coupling Complex (T4CC), a subcomplex composed of the DotLMNYZ core and the IcmSW-LvgA adapter subunits, linked by the C-terminal tail of DotL. Interacts with IcmS. IcmS and IcmW form a stable complex. Interaction with IcmS greatly enhances the stability of IcmW. Interacts directly with the type 4 coupling protein DotL. Interacts with LvgA. Interacts with effector proteins.

The protein resides in the cytoplasm. Its activity is regulated as follows. Interaction with DotL is critical for the export of IcmSW-dependent substrates. Component of the Dot/Icm type IVB secretion system (T4BSS), which is used to inject bacterial effector proteins into eukaryotic host cells. Part of a subcomplex which recruits effector proteins and delivers them to the core transmembrane subcomplex. The IcmS/IcmW protein complex plays an important role in protein translocation by interacting with multiple Dot/Icm effector proteins to facilitate their translocation into host cells. Interaction promotes conformational changes in the effector protein, which may facilitate display of a C-terminal translocation signal. May maintain the substrates in a translocation competent form. Required for intracellular growth in host cells, replicative phagosome formation and phagosome trafficking. This Legionella pneumophila subsp. pneumophila (strain Philadelphia 1 / ATCC 33152 / DSM 7513) protein is Type 4 adapter protein IcmW.